The primary structure comprises 502 residues: Probable cytochrome P450 554A1 (502 aa).

A helical transmembrane segment spans residues 3-20 (LLLFIFFLILFYYSVKYY). A heme-binding site is contributed by C448.

The protein belongs to the cytochrome P450 family. Requires heme as cofactor.

It is found in the membrane. The polypeptide is Probable cytochrome P450 554A1 (cyp554A1) (Dictyostelium discoideum (Social amoeba)).